We begin with the raw amino-acid sequence, 311 residues long: Ribonuclease Z (311 aa).

Residues histidine 63, histidine 65, aspartate 67, histidine 68, histidine 141, aspartate 212, and histidine 270 each contribute to the Zn(2+) site. The active-site Proton acceptor is aspartate 67.

Belongs to the RNase Z family. Homodimer. Zn(2+) serves as cofactor.

It carries out the reaction Endonucleolytic cleavage of RNA, removing extra 3' nucleotides from tRNA precursor, generating 3' termini of tRNAs. A 3'-hydroxy group is left at the tRNA terminus and a 5'-phosphoryl group is left at the trailer molecule.. Its function is as follows. Zinc phosphodiesterase, which displays some tRNA 3'-processing endonuclease activity. Probably involved in tRNA maturation, by removing a 3'-trailer from precursor tRNA. This Lactiplantibacillus plantarum (strain ATCC BAA-793 / NCIMB 8826 / WCFS1) (Lactobacillus plantarum) protein is Ribonuclease Z.